A 434-amino-acid chain; its full sequence is Gamma-glutamyl phosphate reductase (434 aa).

Belongs to the gamma-glutamyl phosphate reductase family.

Its subcellular location is the cytoplasm. It catalyses the reaction L-glutamate 5-semialdehyde + phosphate + NADP(+) = L-glutamyl 5-phosphate + NADPH + H(+). The protein operates within amino-acid biosynthesis; L-proline biosynthesis; L-glutamate 5-semialdehyde from L-glutamate: step 2/2. In terms of biological role, catalyzes the NADPH-dependent reduction of L-glutamate 5-phosphate into L-glutamate 5-semialdehyde and phosphate. The product spontaneously undergoes cyclization to form 1-pyrroline-5-carboxylate. This chain is Gamma-glutamyl phosphate reductase, found in Nostoc sp. (strain PCC 7120 / SAG 25.82 / UTEX 2576).